The following is a 315-amino-acid chain: D-alanine--D-alanine ligase B (315 aa).

The ATP-grasp domain occupies 109–309; that stretch reads KKVAAAAGVV…FAELLSWMVE (201 aa). 135–190 serves as a coordination point for ATP; that stretch reads PMKPPYVVKPVREGSSFGVVIVKEDQPHPPQVIGSADWKYGDEVMVEGYIAGRELT. The Mg(2+) site is built by Asp-259, Glu-276, and Asn-278.

It belongs to the D-alanine--D-alanine ligase family. The cofactor is Mg(2+). Mn(2+) serves as cofactor.

The protein resides in the cytoplasm. It carries out the reaction 2 D-alanine + ATP = D-alanyl-D-alanine + ADP + phosphate + H(+). The protein operates within cell wall biogenesis; peptidoglycan biosynthesis. Cell wall formation. This Brucella melitensis biotype 1 (strain ATCC 23456 / CCUG 17765 / NCTC 10094 / 16M) protein is D-alanine--D-alanine ligase B.